The primary structure comprises 74 residues: UPF0346 protein YozE (74 aa).

This sequence belongs to the UPF0346 family.

This is UPF0346 protein YozE (yozE) from Bacillus subtilis (strain 168).